Reading from the N-terminus, the 345-residue chain is S-adenosylmethionine:tRNA ribosyltransferase-isomerase (345 aa).

It belongs to the QueA family. As to quaternary structure, monomer.

The protein localises to the cytoplasm. It catalyses the reaction 7-aminomethyl-7-carbaguanosine(34) in tRNA + S-adenosyl-L-methionine = epoxyqueuosine(34) in tRNA + adenine + L-methionine + 2 H(+). Its pathway is tRNA modification; tRNA-queuosine biosynthesis. Transfers and isomerizes the ribose moiety from AdoMet to the 7-aminomethyl group of 7-deazaguanine (preQ1-tRNA) to give epoxyqueuosine (oQ-tRNA). The protein is S-adenosylmethionine:tRNA ribosyltransferase-isomerase of Aromatoleum aromaticum (strain DSM 19018 / LMG 30748 / EbN1) (Azoarcus sp. (strain EbN1)).